An 87-amino-acid polypeptide reads, in one-letter code: Neutrophil antibiotic peptide NP-3B (87 aa).

Residues 1-19 (MRTLILLTTLLLLALHTQA) form the signal peptide. A propeptide spanning residues 20 to 58 (ESPQGSTKEAPDEEQDISVFFGGDKGTALQDAAVKAGVT) is cleaved from the precursor. Disulfide bonds link cysteine 59-cysteine 87, cysteine 61-cysteine 76, and cysteine 66-cysteine 86.

This sequence belongs to the alpha-defensin family.

The protein localises to the secreted. Its function is as follows. Active in vitro against S.aureus, fungi, Gram-positive and Gram-negative bacteria and to a lesser extent against an enveloped virus. In Rattus norvegicus (Rat), this protein is Neutrophil antibiotic peptide NP-3B.